A 167-amino-acid polypeptide reads, in one-letter code: MRTLMIEPLTKEAFAQFGDVIETDGSDHFMINNGSTMRFHKLATVETAEPEDKAIISIFRADAQDMPLTVRMLERHPLGSQAFIPLLGNPFLIVVAPVGDAPVSGLVRAFRSNGRQGVNYHRGVWHHPVLTIEKRDDFLVVDRSGSGNNCDEHYFTEEQMLILNPHQ.

Belongs to the ureidoglycolate lyase family. As to quaternary structure, homodimer. Requires Ni(2+) as cofactor.

It catalyses the reaction (S)-ureidoglycolate = urea + glyoxylate. Its pathway is nitrogen metabolism; (S)-allantoin degradation. Functionally, catalyzes the catabolism of the allantoin degradation intermediate (S)-ureidoglycolate, generating urea and glyoxylate. Involved in the utilization of allantoin as nitrogen source. The polypeptide is Ureidoglycolate lyase (Pseudomonas putida (strain ATCC 700007 / DSM 6899 / JCM 31910 / BCRC 17059 / LMG 24140 / F1)).